The chain runs to 331 residues: 5-dehydro-2-deoxygluconokinase (331 aa).

The protein belongs to the carbohydrate kinase PfkB family.

The catalysed reaction is 5-dehydro-2-deoxy-D-gluconate + ATP = 6-phospho-5-dehydro-2-deoxy-D-gluconate + ADP + H(+). Its pathway is polyol metabolism; myo-inositol degradation into acetyl-CoA; acetyl-CoA from myo-inositol: step 5/7. Functionally, catalyzes the phosphorylation of 5-dehydro-2-deoxy-D-gluconate (2-deoxy-5-keto-D-gluconate or DKG) to 6-phospho-5-dehydro-2-deoxy-D-gluconate (DKGP). This is 5-dehydro-2-deoxygluconokinase from Photobacterium profundum (strain SS9).